The primary structure comprises 460 residues: Ammonium transporter Rh type B (460 aa).

Residues 1–10 (MTGYSTNMRI) lie on the Cytoplasmic side of the membrane. Residues 11 to 31 (KLPVFCLLLEFITIILFAVFV) traverse the membrane as a helical segment. Residues 32 to 62 (RYDHESDAKQWHDEMRNHSVQNAENDFYFRY) lie on the Extracellular side of the membrane. Asn48 carries an N-linked (GlcNAc...) asparagine glycan. The helical transmembrane segment at 63-83 (PSFQDVHVMIFIGFGFLMTFL) threads the bilayer. Topologically, residues 84–87 (KRYG) are cytoplasmic. The helical transmembrane segment at 88–108 (FSSVAFNFLIAAFGLQWSTLI) threads the bilayer. Residues 109 to 125 (QGFFHGFHDGKIHVGIE) are Extracellular-facing. Residues 126–146 (SMINADFCTGAVLISFGAVLG) form a helical membrane-spanning segment. Residues 147–150 (KTSP) lie on the Cytoplasmic side of the membrane. A helical membrane pass occupies residues 151–171 (VQLIVMTLIEVTLFGINEYII). Over 172–179 (LNIVGAKD) the chain is Extracellular. A helical transmembrane segment spans residues 180–202 (AGGSMTIHTFGAYFGLIVSRVLY). Residues 203–220 (RDDLEKSRQREGSVYHSD) are Cytoplasmic-facing. Residues 221–241 (LFAMIGTIYLWMFWPSFNSAI) form a helical membrane-spanning segment. At 242–252 (TAHGDDQHRTV) the chain is on the extracellular side. Residues 253–273 (MNTYYSLAACTLATFGFSALL) form a helical membrane-spanning segment. Topologically, residues 274–283 (NGEGKLDMVH) are cytoplasmic. The chain crosses the membrane as a helical span at residues 284 to 304 (IQNAALAGGVAVGTSGEMMLT). Pro305 is a topological domain (extracellular). Residues 306 to 326 (FGAMIAGTLAGMISVLGYKYL) traverse the membrane as a helical segment. The Cytoplasmic segment spans residues 327 to 347 (TPVLDSKLKIQDTCGVHNLHG). A helical transmembrane segment spans residues 348-368 (MPGILGALIGAIVALFATAEI). Residues 369–394 (YGAGMEDVFPLISDGSRTAKQQSLYQ) are Extracellular-facing. The chain crosses the membrane as a helical span at residues 395–415 (FLALLVALGFAILGGLVVGFI). Over 416–460 (LKLPIFGTPSDAECFEDAVYWEVPGGEGHQQLTVVINNEDPDTQA) the chain is Cytoplasmic.

Belongs to the ammonium transporter (TC 2.A.49) family. Rh subfamily.

The protein resides in the basolateral cell membrane. Its subcellular location is the cytoplasmic vesicle membrane. Functionally, functions as a specific ammonium transporter. The protein is Ammonium transporter Rh type B (rhbg) of Xenopus tropicalis (Western clawed frog).